The chain runs to 92 residues: Small ribosomal subunit protein uS19 (92 aa).

This sequence belongs to the universal ribosomal protein uS19 family.

In terms of biological role, protein S19 forms a complex with S13 that binds strongly to the 16S ribosomal RNA. This Streptococcus thermophilus (strain ATCC BAA-491 / LMD-9) protein is Small ribosomal subunit protein uS19.